A 300-amino-acid polypeptide reads, in one-letter code: Ribosomal protein L11 methyltransferase (300 aa).

The S-adenosyl-L-methionine site is built by threonine 147, glycine 168, aspartate 190, and asparagine 236.

It belongs to the methyltransferase superfamily. PrmA family.

It localises to the cytoplasm. It catalyses the reaction L-lysyl-[protein] + 3 S-adenosyl-L-methionine = N(6),N(6),N(6)-trimethyl-L-lysyl-[protein] + 3 S-adenosyl-L-homocysteine + 3 H(+). Functionally, methylates ribosomal protein L11. This chain is Ribosomal protein L11 methyltransferase, found in Leptospira interrogans serogroup Icterohaemorrhagiae serovar Lai (strain 56601).